The chain runs to 125 residues: Small ribosomal subunit protein uS13 (125 aa).

It belongs to the universal ribosomal protein uS13 family. Part of the 30S ribosomal subunit. Forms a loose heterodimer with protein S19. Forms two bridges to the 50S subunit in the 70S ribosome.

In terms of biological role, located at the top of the head of the 30S subunit, it contacts several helices of the 16S rRNA. In the 70S ribosome it contacts the 23S rRNA (bridge B1a) and protein L5 of the 50S subunit (bridge B1b), connecting the 2 subunits; these bridges are implicated in subunit movement. Contacts the tRNAs in the A and P-sites. The chain is Small ribosomal subunit protein uS13 from Rickettsia felis (strain ATCC VR-1525 / URRWXCal2) (Rickettsia azadi).